The sequence spans 347 residues: MSKKIKVGIVGATGYTGVELLRLLAAHPDVEVAAVTSRSEAGTAVADYFPSLRGVYGLAFQTPDEAGLEQCDIVFFATPNGIAMKDAPRLIEQGVRVIDLSADFRIRDIPTWEHWYGMTHAAPDLVSQAVYGLSELNREAVAQARLVANPGCYPTCVSLPLVPLLRQCRLKPGMPLIADCKSGVSGAGRKGNVGSLLCEAGDNFKAYGIAGHRHLPEIRQTIAGLQDGIAEGFVFTPHLAPMIRGMHATVYLHLSDGSNPETVLRDYYRDSLFVDILPAGSTPETRSVRGANLCRISIQQAAQSDVWVVLSVIDNLVKGAAGQAVQNMNIMFGLKETHGLDAIPLLP.

The active site involves C152.

This sequence belongs to the NAGSA dehydrogenase family. Type 1 subfamily.

Its subcellular location is the cytoplasm. The catalysed reaction is N-acetyl-L-glutamate 5-semialdehyde + phosphate + NADP(+) = N-acetyl-L-glutamyl 5-phosphate + NADPH + H(+). The protein operates within amino-acid biosynthesis; L-arginine biosynthesis; N(2)-acetyl-L-ornithine from L-glutamate: step 3/4. Functionally, catalyzes the NADPH-dependent reduction of N-acetyl-5-glutamyl phosphate to yield N-acetyl-L-glutamate 5-semialdehyde. The protein is N-acetyl-gamma-glutamyl-phosphate reductase of Neisseria meningitidis serogroup C (strain 053442).